We begin with the raw amino-acid sequence, 320 residues long: 3-oxoacyl-[acyl-carrier-protein] reductase 1, chloroplastic (320 aa).

Residues 1–60 (MATTVAATKLTSLKAVKKLGFREIRQVRQWSPLQSAMPHFGMLRCGSRQSFATSTVVKAQ) constitute a chloroplast transit peptide. An NADP(+)-binding site is contributed by 82 to 106 (VTGASRGIGKAIALSLGKAGCKVLV). Serine 214 contributes to the substrate binding site. Tyrosine 227 (proton acceptor) is an active-site residue.

Belongs to the short-chain dehydrogenases/reductases (SDR) family. Homotetramer.

Its subcellular location is the plastid. It localises to the chloroplast. It carries out the reaction a (3R)-hydroxyacyl-[ACP] + NADP(+) = a 3-oxoacyl-[ACP] + NADPH + H(+). Its pathway is lipid metabolism; fatty acid biosynthesis. This is 3-oxoacyl-[acyl-carrier-protein] reductase 1, chloroplastic (gbkr1) from Brassica napus (Rape).